A 405-amino-acid chain; its full sequence is L-carnitine CoA-transferase (405 aa).

K97 and R104 together coordinate CoA. Catalysis depends on D169, which acts as the Nucleophile.

This sequence belongs to the CoA-transferase III family. CaiB subfamily. Homodimer.

It localises to the cytoplasm. It catalyses the reaction crotonobetainyl-CoA + (R)-carnitine = crotonobetaine + (R)-carnitinyl-CoA. The catalysed reaction is 4-(trimethylamino)butanoyl-CoA + (R)-carnitine = (R)-carnitinyl-CoA + 4-(trimethylamino)butanoate. It functions in the pathway amine and polyamine metabolism; carnitine metabolism. In terms of biological role, catalyzes the reversible transfer of the CoA moiety from gamma-butyrobetainyl-CoA to L-carnitine to generate L-carnitinyl-CoA and gamma-butyrobetaine. Is also able to catalyze the reversible transfer of the CoA moiety from gamma-butyrobetainyl-CoA or L-carnitinyl-CoA to crotonobetaine to generate crotonobetainyl-CoA. This chain is L-carnitine CoA-transferase, found in Escherichia coli O127:H6 (strain E2348/69 / EPEC).